Reading from the N-terminus, the 216-residue chain is V-type ATP synthase subunit D (216 aa).

It belongs to the V-ATPase D subunit family.

Produces ATP from ADP in the presence of a proton gradient across the membrane. This Clostridium botulinum (strain ATCC 19397 / Type A) protein is V-type ATP synthase subunit D.